Here is a 460-residue protein sequence, read N- to C-terminus: Homocitrate synthase (460 aa).

One can recognise a Pyruvate carboxyltransferase domain in the interval 3–258 (VGILDSTLRE…IEVVKLNKLQ (256 aa)). R11 is a 2-oxoglutarate binding site. Residue E12 coordinates Mg(2+). 2-oxoglutarate-binding residues include H75, R135, and T169. The Mg(2+) site is built by H197 and H199. H291 functions as the Proton acceptor in the catalytic mechanism.

Belongs to the alpha-IPM synthase/homocitrate synthase family. Homocitrate synthase LYS20/LYS21 subfamily. In terms of assembly, forms a homotetramer in the absence of lysine, and is in hexadecamer-octamer equilibrium in the presence of lysine. The cofactor is Mg(2+). Mn(2+) is required as a cofactor.

It carries out the reaction acetyl-CoA + 2-oxoglutarate + H2O = (2R)-homocitrate + CoA + H(+). Its pathway is amino-acid biosynthesis; L-lysine biosynthesis via AAA pathway; L-alpha-aminoadipate from 2-oxoglutarate: step 1/5. Inhibited by lysine. In terms of biological role, catalyzes the aldol-type condensation of 2-oxoglutarate with acetyl-CoA to yield homocitrate. Carries out the first step of the alpha-aminoadipate (AAA) lysine biosynthesis pathway. The polypeptide is Homocitrate synthase (Sulfurisphaera tokodaii (strain DSM 16993 / JCM 10545 / NBRC 100140 / 7) (Sulfolobus tokodaii)).